The sequence spans 308 residues: Pantothenate synthetase (308 aa).

39–46 (MGALHDGH) serves as a coordination point for ATP. His46 serves as the catalytic Proton donor. Gln71 is a binding site for (R)-pantoate. Gln71 provides a ligand contact to beta-alanine. 157 to 160 (GEKD) lines the ATP pocket. Gln163 is a (R)-pantoate binding site. ATP contacts are provided by residues Val186 and 194–197 (MSSR). The segment at 286-308 (IETPAGTAGPDGDRQYAQSPWRN) is disordered.

This sequence belongs to the pantothenate synthetase family. As to quaternary structure, homodimer.

The protein localises to the cytoplasm. It carries out the reaction (R)-pantoate + beta-alanine + ATP = (R)-pantothenate + AMP + diphosphate + H(+). It participates in cofactor biosynthesis; (R)-pantothenate biosynthesis; (R)-pantothenate from (R)-pantoate and beta-alanine: step 1/1. Its function is as follows. Catalyzes the condensation of pantoate with beta-alanine in an ATP-dependent reaction via a pantoyl-adenylate intermediate. The sequence is that of Pantothenate synthetase from Mycobacterium avium (strain 104).